A 108-amino-acid polypeptide reads, in one-letter code: Small ribosomal subunit protein bS16 (108 aa).

Residues 82–108 (ESKFSKNTQTENKKPVSKKTTKKSKDN) are disordered. Positions 96-108 (PVSKKTTKKSKDN) are enriched in basic residues.

It belongs to the bacterial ribosomal protein bS16 family.

This chain is Small ribosomal subunit protein bS16, found in Mycoplasma capricolum subsp. capricolum (strain California kid / ATCC 27343 / NCTC 10154).